The chain runs to 509 residues: 4-aminobutyrate aminotransferase (509 aa).

Pyridoxal 5'-phosphate is bound at residue 166 to 167; sequence GS. Arginine 223 serves as a coordination point for substrate. Position 363 is an N6-(pyridoxal phosphate)lysine (lysine 363). Threonine 387 serves as a coordination point for pyridoxal 5'-phosphate.

It belongs to the class-III pyridoxal-phosphate-dependent aminotransferase family. Homodimer. Pyridoxal 5'-phosphate serves as cofactor.

The protein resides in the cytoplasm. It catalyses the reaction 4-aminobutanoate + 2-oxoglutarate = succinate semialdehyde + L-glutamate. Functionally, deaminates gamma-aminobutyric acid (GABA) to succinate-semialdehyde, which in turn is converted to succinate by the succinate semialdehyde dehydrogenase. Not required for the utilization of GABA as nitrogen source. The protein is 4-aminobutyrate aminotransferase (GATA) of Mycosarcoma maydis (Corn smut fungus).